A 395-amino-acid polypeptide reads, in one-letter code: Univin (395 aa).

Residues 1 to 19 (MDVSKVLILTLIWLLTADS) form the signal peptide. Positions 20-272 (APPDYVTLTR…CSKRNRRNKR (253 aa)) are excised as a propeptide. Asn-50 is a glycosylation site (N-linked (GlcNAc...) asparagine). Residues 69 to 97 (EGAAASRGGETEIGKEEEEDGRPCSETKL) form a disordered region. Asn-116 and Asn-336 each carry an N-linked (GlcNAc...) asparagine glycan. 3 disulfide bridges follow: Cys-294-Cys-360, Cys-323-Cys-392, and Cys-327-Cys-394.

It belongs to the TGF-beta family. As to quaternary structure, homodimer; disulfide-linked.

It localises to the secreted. In terms of biological role, could have a critical role in early developmental decisions in the sea urchin embryo. This chain is Univin, found in Strongylocentrotus purpuratus (Purple sea urchin).